Reading from the N-terminus, the 315-residue chain is Olfactory receptor 2T5 (315 aa).

Residues 1-29 lie on the Extracellular side of the membrane; the sequence is MANITRMANHTGKLDFILMGLFRRSKHPA. N-linked (GlcNAc...) asparagine glycans are attached at residues asparagine 3 and asparagine 9. Residues 30-53 form a helical membrane-spanning segment; it reads LLSVVIFVVFLKALSGNAVLILLI. At 54-61 the chain is on the cytoplasmic side; sequence HCDAHLHS. A helical transmembrane segment spans residues 62–83; the sequence is PMYFFISQLSLMDMAYISVTVP. The Extracellular segment spans residues 84–104; it reads KMLLDQVMGVNKVSAPECGMQ. Cysteine 101 and cysteine 193 are oxidised to a cystine. The chain crosses the membrane as a helical span at residues 105-124; it reads MFLYLTLAGSEFFLLATMAY. Residues 125-143 lie on the Cytoplasmic side of the membrane; that stretch reads DRYVAICHPLRYPVLMNHR. Residues 144–162 traverse the membrane as a helical segment; sequence VCLFLASGCWFLGSVDGFM. At 163-199 the chain is on the extracellular side; sequence LTPITMSFPFCRSWEIHHFFCEVPAVTILSCSDTSLY. The helical transmembrane segment at 200–223 threads the bilayer; sequence ETLMYLCCVLMLLIPVTIISSSYL. Residues 224-240 are Cytoplasmic-facing; it reads LILLTVHRMNSAEGRKK. The helical transmembrane segment at 241–263 threads the bilayer; that stretch reads AFATCSSHLTVVILFYGAAVYTY. The Extracellular segment spans residues 264-276; sequence MLPSSYHTPEKDM. Residues 277–296 form a helical membrane-spanning segment; sequence MVSVFYTILTPVLNPLIYSL. The Cytoplasmic segment spans residues 297-315; it reads RNKDVMGALKKMLTVRFVL.

Belongs to the G-protein coupled receptor 1 family.

Its subcellular location is the cell membrane. Odorant receptor. This is Olfactory receptor 2T5 (OR2T5) from Homo sapiens (Human).